The primary structure comprises 874 residues: Probable inorganic carbon transporter subunit DabA (874 aa).

Residues Cys398, Asp400, His580, and Cys595 each contribute to the Zn(2+) site.

Belongs to the inorganic carbon transporter (TC 9.A.2) DabA family. As to quaternary structure, forms a complex with DabB. The cofactor is Zn(2+).

The protein resides in the cell membrane. Its function is as follows. Part of an energy-coupled inorganic carbon pump. The polypeptide is Probable inorganic carbon transporter subunit DabA (Bacillus thuringiensis subsp. konkukian (strain 97-27)).